The primary structure comprises 397 residues: MSKVFIATANAGKAHDADIFSVSACNSFTVSCSGDGYLKVWDNKLLDNENPKDKSYSHFVHKSGLHHVDVLQAIERDAFELCLVATTSFSGDLLFYRITREDETKKVIFEKLDLLDSDMKKHSFWALKWGASNDRLLSHRLVATDVKGTTYIWKFHPFADESNSLTLNWSPTLELQGTVESPMTPSQFATSVDISERGLIATGFNNGTVQISELSTLRPLYNFESQHSMINNSNSIRSVKFSPQGSLLAIAHDSNSFGCITLYETEFGERIGSLSVPTHSSQASLGEFAHSSWVMSLSFNDSGETLCSAGWDGKLRFWDVKTKERITTLNMHCDDIEIEEDILAVDEHGDSLAEPGVFDVKFLKKGWRSGMGADLNESLCCVCLDRSIRWFREAGGK.

WD repeat units lie at residues 21 to 42, 67 to 101, 126 to 157, 191 to 213, 238 to 264, 296 to 319, and 359 to 392; these read SVSA…KVWD, HVDV…ITRE, ALKW…KFHP, SVDI…QISE, SVKF…TLYE, SLSF…RFWD, and DVKF…RWFR.

It belongs to the SKI8 family. As to quaternary structure, component of the SKI complex composed of at least SKI2, SKI3 and SKI8. The SKI complex interacts with SKI7, which makes the link between the SKI complex and the exosome in order to perform mRNA degradation.

It localises to the cytoplasm. The protein resides in the nucleus. Its subcellular location is the chromosome. Its function is as follows. Involved in double-strand break (DSB) formation during meiotic recombination through stabilization of SPO11 association with meiotic chromosome and helping SPO11 to recruit other DSB proteins like REC102 and REC104 to meiotic chromosomes. Also a component of the SKI complex involved in 3'-mRNA degradation pathway. Represses dsRNA virus propagation by specifically blocking translation of viral mRNAs, perhaps recognizing the absence of CAP or poly(A). Essential for controlling the propagation of M double-stranded RNA (dsRNA) and thus for preventing virus-induced cytopathology. The polypeptide is Antiviral protein SKI8 (SKI8) (Saccharomyces cerevisiae (strain ATCC 204508 / S288c) (Baker's yeast)).